Consider the following 441-residue polypeptide: ATP-dependent protease ATPase subunit HslU (441 aa).

Residues I18, 60–65 (GVGKTE), D254, E319, and R391 each bind ATP.

The protein belongs to the ClpX chaperone family. HslU subfamily. A double ring-shaped homohexamer of HslV is capped on each side by a ring-shaped HslU homohexamer. The assembly of the HslU/HslV complex is dependent on binding of ATP.

Its subcellular location is the cytoplasm. Functionally, ATPase subunit of a proteasome-like degradation complex; this subunit has chaperone activity. The binding of ATP and its subsequent hydrolysis by HslU are essential for unfolding of protein substrates subsequently hydrolyzed by HslV. HslU recognizes the N-terminal part of its protein substrates and unfolds these before they are guided to HslV for hydrolysis. The chain is ATP-dependent protease ATPase subunit HslU from Shewanella frigidimarina (strain NCIMB 400).